The following is a 390-amino-acid chain: S-adenosylmethionine synthase (390 aa).

H15 lines the ATP pocket. Residue D17 coordinates Mg(2+). A K(+)-binding site is contributed by E43. L-methionine is bound by residues E56 and Q99. A flexible loop region spans residues 99–109 (QSPDINQGVDR). Residues 164 to 166 (DAK), 230 to 231 (RF), D239, 245 to 246 (RK), A262, and K266 each bind ATP. Residue D239 participates in L-methionine binding. K270 is an L-methionine binding site.

The protein belongs to the AdoMet synthase family. As to quaternary structure, homotetramer; dimer of dimers. Requires Mg(2+) as cofactor. It depends on K(+) as a cofactor.

The protein localises to the cytoplasm. The enzyme catalyses L-methionine + ATP + H2O = S-adenosyl-L-methionine + phosphate + diphosphate. It participates in amino-acid biosynthesis; S-adenosyl-L-methionine biosynthesis; S-adenosyl-L-methionine from L-methionine: step 1/1. Functionally, catalyzes the formation of S-adenosylmethionine (AdoMet) from methionine and ATP. The overall synthetic reaction is composed of two sequential steps, AdoMet formation and the subsequent tripolyphosphate hydrolysis which occurs prior to release of AdoMet from the enzyme. The sequence is that of S-adenosylmethionine synthase from Photorhabdus laumondii subsp. laumondii (strain DSM 15139 / CIP 105565 / TT01) (Photorhabdus luminescens subsp. laumondii).